Here is a 397-residue protein sequence, read N- to C-terminus: S-adenosylmethionine synthase (397 aa).

His15 is an ATP binding site. Asp17 provides a ligand contact to Mg(2+). Glu43 contacts K(+). 2 residues coordinate L-methionine: Glu56 and Gln99. A flexible loop region spans residues Gln99 to Ala109. ATP is bound by residues Asp173 to Lys175, Lys242 to Phe243, Asp251, Arg257 to Lys258, Ala274, and Lys278. L-methionine is bound at residue Asp251. An L-methionine-binding site is contributed by Lys282.

It belongs to the AdoMet synthase family. Homotetramer; dimer of dimers. Requires Mg(2+) as cofactor. K(+) is required as a cofactor.

It is found in the cytoplasm. The catalysed reaction is L-methionine + ATP + H2O = S-adenosyl-L-methionine + phosphate + diphosphate. It functions in the pathway amino-acid biosynthesis; S-adenosyl-L-methionine biosynthesis; S-adenosyl-L-methionine from L-methionine: step 1/1. In terms of biological role, catalyzes the formation of S-adenosylmethionine (AdoMet) from methionine and ATP. The overall synthetic reaction is composed of two sequential steps, AdoMet formation and the subsequent tripolyphosphate hydrolysis which occurs prior to release of AdoMet from the enzyme. The protein is S-adenosylmethionine synthase of Cutibacterium acnes (strain DSM 16379 / KPA171202) (Propionibacterium acnes).